A 501-amino-acid polypeptide reads, in one-letter code: Endoglucanase 1 (501 aa).

The first 29 residues, 1-29 (MALYLSSSRLITFLSFILLLSNGFSSSSS), serve as a signal peptide directing secretion. Residue Asp96 is the Nucleophile of the active site. Residues His422, Asp473, and Glu482 contribute to the active site.

The protein belongs to the glycosyl hydrolase 9 (cellulase E) family.

Its subcellular location is the secreted. The catalysed reaction is Endohydrolysis of (1-&gt;4)-beta-D-glucosidic linkages in cellulose, lichenin and cereal beta-D-glucans.. In Arabidopsis thaliana (Mouse-ear cress), this protein is Endoglucanase 1 (CEL2).